The chain runs to 602 residues: Alpha-(1-&gt;6)-mannopyranosyltransferase B (602 aa).

Transmembrane regions (helical) follow at residues Ile105–Val125, Met148–Val168, Thr190–Tyr210, Val244–Ala264, Ile274–Trp294, Leu320–Val340, Gly368–Val388, Val404–Val424, Trp448–Leu468, Thr472–Val492, Ile503–Val523, Leu546–Leu566, and Val571–Trp591.

Belongs to the MptA/B family.

The protein localises to the membrane. It functions in the pathway cell wall biogenesis; cell wall polysaccharide biosynthesis. Its function is as follows. Involved in the initiation of core alpha-(1-&gt;6) mannan biosynthesis of lipomannan (LM-A) and multi-mannosylated polymer (LM-B), extending triacylatedphosphatidyl-myo-inositol dimannoside (Ac1PIM2) and mannosylated glycolipid, 1,2-di-O-C16/C18:1-(alpha-D-mannopyranosyl)-(1-&gt;4)-(alpha-D-glucopyranosyluronic acid)-(1-&gt;3)-glycerol (Man1GlcAGroAc2), respectively. Catalyzes the addition of alpha-(1-&gt;6)-mannose residue. The protein is Alpha-(1-&gt;6)-mannopyranosyltransferase B (mptB) of Corynebacterium glutamicum (strain ATCC 13032 / DSM 20300 / JCM 1318 / BCRC 11384 / CCUG 27702 / LMG 3730 / NBRC 12168 / NCIMB 10025 / NRRL B-2784 / 534).